We begin with the raw amino-acid sequence, 362 residues long: Chalcone synthase A (362 aa).

C168 is an active-site residue.

Belongs to the thiolase-like superfamily. Chalcone/stilbene synthases family.

The enzyme catalyses (E)-4-coumaroyl-CoA + 3 malonyl-CoA + 3 H(+) = 2',4,4',6'-tetrahydroxychalcone + 3 CO2 + 4 CoA. It participates in secondary metabolite biosynthesis; flavonoid biosynthesis. In terms of biological role, the primary product of this enzyme is 4,2',4',6'-tetrahydroxychalcone (also termed naringenin-chalcone or chalcone) which can under specific conditions spontaneously isomerize into naringenin. This is Chalcone synthase A (CHSA) from Ipomoea platensis (Morning glory).